The chain runs to 96 residues: Small ribosomal subunit protein bS6 (96 aa).

Belongs to the bacterial ribosomal protein bS6 family.

Binds together with bS18 to 16S ribosomal RNA. The chain is Small ribosomal subunit protein bS6 from Acidothermus cellulolyticus (strain ATCC 43068 / DSM 8971 / 11B).